The chain runs to 217 residues: Phosphatidylcholine synthase (217 aa).

A helical membrane pass occupies residues 1 to 8 (ACIGVFSL). Residues 9–16 (VKIYQHEY) lie on the Periplasmic side of the membrane. The chain crosses the membrane as a helical span at residues 17-37 (IFALWLMFITVVIDAVDGTLA). The Cytoplasmic segment spans residues 38-50 (RLVNIKKILPKID). The chain crosses the membrane as a helical span at residues 51-71 (GALLDNIVDYLNYVITPCFFL). Topologically, residues 72-77 (LVKPGM) are periplasmic. A helical transmembrane segment spans residues 78–98 (LPPEYSVFLIAAVSITSAYQF). Over 99–107 (CQCDAKTPD) the chain is Cytoplasmic. A helical membrane pass occupies residues 108–128 (HFFKGFPCYWNITILYMFIFN). A topological domain (periplasmic) is located at residue Thr-129. A helical membrane pass occupies residues 130–149 (SAATNAIILIILSILIFVPV). Topologically, residues 150-164 (KYVYPSRLDYLTESR) are cytoplasmic. The helical transmembrane segment at 165-185 (ILKILMHICSIIYAVSSICIL) threads the bilayer. Residues 186 to 191 (ISYPNT) are Periplasmic-facing. The helical transmembrane segment at 192–212 (NIICLSLSVAYVGMYLFLSFY) threads the bilayer. Residues 213 to 217 (RTYYP) are Cytoplasmic-facing.

Belongs to the CDP-alcohol phosphatidyltransferase class-I family. The cofactor is Mn(2+).

The protein localises to the cell inner membrane. It carries out the reaction a CDP-1,2-diacyl-sn-glycerol + choline = a 1,2-diacyl-sn-glycero-3-phosphocholine + CMP + H(+). Functionally, condenses choline with CDP-diglyceride to produce phosphatidylcholine and CMP. The polypeptide is Phosphatidylcholine synthase (Legionella bozemanae (Fluoribacter bozemanae)).